Here is a 243-residue protein sequence, read N- to C-terminus: Transmembrane protein 174 (243 aa).

2 consecutive transmembrane segments (helical) span residues 40–60 (LLFS…MGWI) and 73–93 (LLGP…VCKF).

In terms of assembly, interacts with SLC34A1; regulates SLC34A1 internalization by PTH and FGF23. Predominantly expressed in kidney. Selectively localized in the apical membrane of renal proximal tubule epithelial cells.

The protein localises to the endoplasmic reticulum membrane. It localises to the apical cell membrane. Functionally, regulator of plasma phosphate homeostasis. Decreases serum inorganic phosphate (Pi) uptake by regulating the sodium-phosphate cotransporter SLC34A1 trafficking by PTH and FGF23 in the kidney. The protein is Transmembrane protein 174 (TMEM174) of Homo sapiens (Human).